The sequence spans 315 residues: Pantothenate kinase (315 aa).

94 to 101 is an ATP binding site; sequence GSVAVGKS.

The protein belongs to the prokaryotic pantothenate kinase family.

The protein resides in the cytoplasm. The catalysed reaction is (R)-pantothenate + ATP = (R)-4'-phosphopantothenate + ADP + H(+). The protein operates within cofactor biosynthesis; coenzyme A biosynthesis; CoA from (R)-pantothenate: step 1/5. This Citrobacter koseri (strain ATCC BAA-895 / CDC 4225-83 / SGSC4696) protein is Pantothenate kinase.